A 260-amino-acid polypeptide reads, in one-letter code: Spectinomycin 9-adenylyltransferase (260 aa).

It carries out the reaction spectinomycin + ATP = 9-O-adenylylspectinomycin + diphosphate. Functionally, mediates bacterial resistance to the antibiotic spectinomycin but not streptomycin. The sequence is that of Spectinomycin 9-adenylyltransferase (ant1) from Staphylococcus aureus (strain Mu50 / ATCC 700699).